A 206-amino-acid polypeptide reads, in one-letter code: Ribosomal RNA large subunit methyltransferase E (206 aa).

G60, W62, D80, D96, and D121 together coordinate S-adenosyl-L-methionine. K161 acts as the Proton acceptor in catalysis.

It belongs to the class I-like SAM-binding methyltransferase superfamily. RNA methyltransferase RlmE family.

Its subcellular location is the cytoplasm. It carries out the reaction uridine(2552) in 23S rRNA + S-adenosyl-L-methionine = 2'-O-methyluridine(2552) in 23S rRNA + S-adenosyl-L-homocysteine + H(+). Functionally, specifically methylates the uridine in position 2552 of 23S rRNA at the 2'-O position of the ribose in the fully assembled 50S ribosomal subunit. The protein is Ribosomal RNA large subunit methyltransferase E of Legionella pneumophila (strain Lens).